A 140-amino-acid chain; its full sequence is 3-hydroxyacyl-[acyl-carrier-protein] dehydratase FabZ (140 aa).

Residue H47 is part of the active site.

The protein belongs to the thioester dehydratase family. FabZ subfamily.

Its subcellular location is the cytoplasm. It catalyses the reaction a (3R)-hydroxyacyl-[ACP] = a (2E)-enoyl-[ACP] + H2O. Involved in unsaturated fatty acids biosynthesis. Catalyzes the dehydration of short chain beta-hydroxyacyl-ACPs and long chain saturated and unsaturated beta-hydroxyacyl-ACPs. The polypeptide is 3-hydroxyacyl-[acyl-carrier-protein] dehydratase FabZ (Streptococcus pneumoniae (strain 70585)).